Consider the following 525-residue polypeptide: Probable protein kinase UbiB (525 aa).

In terms of domain architecture, Protein kinase spans 118–500 (DFERVPVASA…QKRTNRLLQG (383 aa)). ATP-binding positions include 124 to 132 (VASASIAQV) and K150. D285 (proton acceptor) is an active-site residue. A helical membrane pass occupies residues 501–521 (LLLFGVAVGVGAALARVFLAL).

It belongs to the ABC1 family. UbiB subfamily.

The protein resides in the cell inner membrane. It functions in the pathway cofactor biosynthesis; ubiquinone biosynthesis [regulation]. In terms of biological role, is probably a protein kinase regulator of UbiI activity which is involved in aerobic coenzyme Q (ubiquinone) biosynthesis. This Paraburkholderia xenovorans (strain LB400) protein is Probable protein kinase UbiB.